The chain runs to 545 residues: Glucose-6-phosphate isomerase (545 aa).

The active-site Proton donor is the E351. Residues H382 and K510 contribute to the active site.

This sequence belongs to the GPI family.

It localises to the cytoplasm. The enzyme catalyses alpha-D-glucose 6-phosphate = beta-D-fructose 6-phosphate. It functions in the pathway carbohydrate biosynthesis; gluconeogenesis. The protein operates within carbohydrate degradation; glycolysis; D-glyceraldehyde 3-phosphate and glycerone phosphate from D-glucose: step 2/4. Its function is as follows. Catalyzes the reversible isomerization of glucose-6-phosphate to fructose-6-phosphate. In Shewanella sp. (strain MR-7), this protein is Glucose-6-phosphate isomerase.